The sequence spans 387 residues: Alanine racemase (387 aa).

Lysine 38 (proton acceptor; specific for D-alanine) is an active-site residue. Lysine 38 carries the post-translational modification N6-(pyridoxal phosphate)lysine. A substrate-binding site is contributed by arginine 136. Tyrosine 267 serves as the catalytic Proton acceptor; specific for L-alanine. Methionine 315 contacts substrate.

The protein belongs to the alanine racemase family. Pyridoxal 5'-phosphate is required as a cofactor.

The catalysed reaction is L-alanine = D-alanine. It participates in amino-acid biosynthesis; D-alanine biosynthesis; D-alanine from L-alanine: step 1/1. Catalyzes the interconversion of L-alanine and D-alanine. May also act on other amino acids. This chain is Alanine racemase (alr), found in Clostridium novyi (strain NT).